The chain runs to 85 residues: Cell division topological specificity factor (85 aa).

This sequence belongs to the MinE family.

Its function is as follows. Prevents the cell division inhibition by proteins MinC and MinD at internal division sites while permitting inhibition at polar sites. This ensures cell division at the proper site by restricting the formation of a division septum at the midpoint of the long axis of the cell. The sequence is that of Cell division topological specificity factor from Shewanella baltica (strain OS223).